The chain runs to 41 residues: GTPCKCHGYIGVYWFMLAGCPDGYGYNLSCPYFLGICCVKK.

3 disulfides stabilise this stretch: Cys-4–Cys-37, Cys-6–Cys-30, and Cys-20–Cys-38.

This sequence belongs to the sea anemone type 3 (BDS) potassium channel toxin family.

The protein resides in the secreted. It is found in the nematocyst. Its function is as follows. Weakly and reversibly inhibits rat homomeric ASIC1 (isoform ASIC1a) (IC(50)=4.95 uM), and ASIC3 (IC(50)=17 uM). ASIC1a current inhibition and ASIC3 transient current inhibition are not complete, and reach a maximum of 70% inhibition and 80%, respectively. The chain is Pi-stichotoxin-Hcr5c from Radianthus crispa (Leathery sea anemone).